The primary structure comprises 381 residues: MVLRGVRVVELAGLAPGPFCGMVLADFGAEVVRVNRLGSTGENFLARGKRSLALDLKRSQGVTVLRRMCARADVLLEPFRCGVMEKLQLGPETLLQDNPKLIYARLSGFGQSGIFSKVAGHDINYLALSGVLSKIGRSGENPYPPLNLLADFGGGGLMCTLGIVLALFERTRSGRGQVIDSSMVEGTAYLSSFLWKTQPMGLWKQPRGQNILDGGAPFYTTYKTADGEFMAVGAIEPQFYALLLKGLGLESEELPSQMSSADWPEMKKKFADVFAKKTKAEWCQIFDGTDACVTPVLTFEEALHHQHNRERASFITDGEQLPSPRPAPLLSRTPAVPSAKRDPSVGEHTVEVLREYGFSQEEILQLHSDRIVESDKLKANL.

Residues arginine 36 and 54-57 contribute to the substrate site; that span reads LDLK. Lysine 57 carries the N6-acetyllysine modification. An N6-acetyllysine; alternate mark is found at lysine 86 and lysine 100. N6-succinyllysine; alternate occurs at positions 86 and 100. Lysine 117 bears the N6-acetyllysine mark. 120–125 contacts substrate; sequence GHDINY. The Proton acceptor role is filled by histidine 121. The active-site Proton donor is the aspartate 151. Lysine 267 is modified (N6-succinyllysine). The segment at 316–344 is disordered; that stretch reads TDGEQLPSPRPAPLLSRTPAVPSAKRDPS. Positions 379-381 match the Microbody targeting signal motif; the sequence is ANL.

Belongs to the CoA-transferase III family. Monomer.

It is found in the peroxisome. Its subcellular location is the mitochondrion. It catalyses the reaction a (2S)-2-methylacyl-CoA = a (2R)-2-methylacyl-CoA. The catalysed reaction is (25R)-3alpha,7alpha,12alpha-trihydroxy-5beta-cholestan-26-oyl-CoA = (25S)-3alpha,7alpha,12alpha-trihydroxy-5beta-cholestan-26-oyl-CoA. It carries out the reaction (2R,6)-dimethylheptanoyl-CoA = (2S,6)-dimethylheptanoyl-CoA. It functions in the pathway lipid metabolism; bile acid biosynthesis. Its pathway is lipid metabolism; fatty acid metabolism. In terms of biological role, catalyzes the interconversion of (R)- and (S)-stereoisomers of alpha-methyl-branched-chain fatty acyl-CoA esters. Acts only on coenzyme A thioesters, not on free fatty acids, and accepts as substrates a wide range of alpha-methylacyl-CoAs, including pristanoyl-CoA, trihydroxycoprostanoyl-CoA (an intermediate in bile acid synthesis), and arylpropionic acids like the anti-inflammatory drug ibuprofen (2-(4-isobutylphenyl)propionic acid) but neither 3-methyl-branched nor linear-chain acyl-CoAs. The polypeptide is Alpha-methylacyl-CoA racemase (Amacr) (Mus musculus (Mouse)).